The following is a 124-amino-acid chain: MNLEYVHVVQKFNQVLLELTKKVCTVVGGSKPTYWYHHIRRVCSECPSMPMTMIGPYLNVYKTQILTKDKNFFMNFDPAHNEYTFIIQKLKEAARNMSEEELEQYWVKLLFLLKSYIKCKPFIN.

This sequence belongs to the asfivirus H124R family.

Its subcellular location is the virion. This is an uncharacterized protein from Ornithodoros (relapsing fever ticks).